The chain runs to 306 residues: Peroxisome biogenesis factor 10 (306 aa).

Residues 1–52 (MHLSAHIDPLQIILCTEIDEACIQFIKSQIEGIARACGPRMQANFEGVLIPY) lie on the Peroxisomal matrix side of the membrane. The chain crosses the membrane as a helical span at residues 53–84 (VDVLGKFLYRACCLRYATMGEEAARIVLAKQD). Over 85–147 (RSKGLVLATT…PEAVISKEKH (63 aa)) the chain is Cytoplasmic. Residues 148–174 (LVYILNSFKPILLKLVSIIRFLCLTMK) traverse the membrane as a helical segment. Residues 175 to 202 (GHCATVSQLLLGLKYISLDEINPEEKKK) lie on the Peroxisomal matrix side of the membrane. A helical transmembrane segment spans residues 203-219 (VLTLLLLLGSRLIASIL). Residues 220–306 (QHSNSYFDQH…SSPSKIILLR (87 aa)) lie on the Cytoplasmic side of the membrane. 8 residues coordinate Zn(2+): Cys256, Cys259, Cys271, His273, Cys276, Cys279, Cys290, and Cys293. Residues 256 to 294 (CSLCMEFIHCPAATECGHIFCWSCINGWTSKKSECPLCR) form an RING-type zinc finger.

This sequence belongs to the pex2/pex10/pex12 family. Component of the PEX2-PEX10-PEX12 retrotranslocation channel, composed of PEX2, PEX10 and PEX12.

Its subcellular location is the peroxisome membrane. It carries out the reaction S-ubiquitinyl-[E2 ubiquitin-conjugating enzyme]-L-cysteine + [acceptor protein]-L-lysine = [E2 ubiquitin-conjugating enzyme]-L-cysteine + N(6)-ubiquitinyl-[acceptor protein]-L-lysine.. Its pathway is protein modification; protein ubiquitination. With respect to regulation, the E3 ubiquitin-protein ligase activity is stimulated by PEX12. Functionally, E3 ubiquitin-protein ligase component of a retrotranslocation channel required for peroxisome organization by mediating export of the PEX5 receptor from peroxisomes to the cytosol, thereby promoting PEX5 recycling. The retrotranslocation channel is composed of PEX2, PEX10 and PEX12; each subunit contributing transmembrane segments that coassemble into an open channel that specifically allows the passage of PEX5 through the peroxisomal membrane. PEX10 also regulates PEX5 recycling by acting as a E3 ubiquitin-protein ligase. When PEX5 recycling is compromised, PEX10 catalyzes polyubiquitination of PEX5 during its passage through the retrotranslocation channel, leading to its degradation. The sequence is that of Peroxisome biogenesis factor 10 (pas4) from Schizosaccharomyces pombe (strain 972 / ATCC 24843) (Fission yeast).